Reading from the N-terminus, the 333-residue chain is Glyceraldehyde-3-phosphate dehydrogenase (333 aa).

NAD(+) contacts are provided by residues Arg-11 to Ile-12, Asp-35, Met-79, and Ser-121. D-glyceraldehyde 3-phosphate is bound by residues Ser-150–Thr-152, Thr-181, Thr-210–Gly-211, and Arg-233. Cys-151 (nucleophile) is an active-site residue. Asn-315 provides a ligand contact to NAD(+).

Belongs to the glyceraldehyde-3-phosphate dehydrogenase family. Homotetramer.

It localises to the cytoplasm. The catalysed reaction is D-glyceraldehyde 3-phosphate + phosphate + NAD(+) = (2R)-3-phospho-glyceroyl phosphate + NADH + H(+). It participates in carbohydrate degradation; glycolysis; pyruvate from D-glyceraldehyde 3-phosphate: step 1/5. Catalyzes the oxidative phosphorylation of glyceraldehyde 3-phosphate (G3P) to 1,3-bisphosphoglycerate (BPG) using the cofactor NAD. The first reaction step involves the formation of a hemiacetal intermediate between G3P and a cysteine residue, and this hemiacetal intermediate is then oxidized to a thioester, with concomitant reduction of NAD to NADH. The reduced NADH is then exchanged with the second NAD, and the thioester is attacked by a nucleophilic inorganic phosphate to produce BPG. The chain is Glyceraldehyde-3-phosphate dehydrogenase (gap) from Bacteroides fragilis (strain YCH46).